The chain runs to 318 residues: Ribonuclease Z (318 aa).

Positions 62, 64, 66, 67, 144, 215, and 273 each coordinate Zn(2+). The active-site Proton acceptor is the D66.

The protein belongs to the RNase Z family. Homodimer. It depends on Zn(2+) as a cofactor.

It catalyses the reaction Endonucleolytic cleavage of RNA, removing extra 3' nucleotides from tRNA precursor, generating 3' termini of tRNAs. A 3'-hydroxy group is left at the tRNA terminus and a 5'-phosphoryl group is left at the trailer molecule.. In terms of biological role, zinc phosphodiesterase, which displays some tRNA 3'-processing endonuclease activity. Probably involved in tRNA maturation, by removing a 3'-trailer from precursor tRNA. This chain is Ribonuclease Z, found in Prochlorococcus marinus (strain MIT 9313).